A 483-amino-acid polypeptide reads, in one-letter code: ATP-dependent RNA helicase DDX25 (483 aa).

Thr49 carries the post-translational modification Phosphothreonine. The Nuclear export signal motif lies at 61-74; that stretch reads LAANSLLNKLIRQS. The short motif at 97 to 125 is the Q motif element; sequence KTFEELRLKEELLKGIYAMGFNRPSKIQE. A Nuclear localization signal motif is present at residues 100 to 114; sequence EELRLKEELLKGIYA. Residues 130-300 enclose the Helicase ATP-binding domain; sequence MMLAHPPQNL…ERIIPDPNVI (171 aa). Residue 143 to 150 coordinates ATP; sequence SQSGTGKT. Residues 247 to 250 carry the DEAD box motif; that stretch reads DEAD. Residues 311-478 enclose the Helicase C-terminal domain; the sequence is NIRQYYVLCE…QLDPEDMDEI (168 aa).

The protein belongs to the DEAD box helicase family. In terms of processing, phosphorylated on threonine residues. The phosphorylated form is found in the cytoplasm but not in the nucleus. In terms of tissue distribution, isoform 1 is expressed in germ cells. Isoform 2 is highly expressed in Leydig cells and weakly expressed in the pituitary and hypothalamus. Isoform 3 is weakly expressed only in germ cells.

The protein localises to the cytoplasm. It is found in the nucleus. The catalysed reaction is ATP + H2O = ADP + phosphate + H(+). ATP-dependent RNA helicase. Required for mRNA export and translation regulation during spermatid development. This is ATP-dependent RNA helicase DDX25 (Ddx25) from Rattus norvegicus (Rat).